Here is a 446-residue protein sequence, read N- to C-terminus: Na(+)-translocating NADH-quinone reductase subunit A (446 aa).

It belongs to the NqrA family. In terms of assembly, composed of six subunits; NqrA, NqrB, NqrC, NqrD, NqrE and NqrF.

The catalysed reaction is a ubiquinone + n Na(+)(in) + NADH + H(+) = a ubiquinol + n Na(+)(out) + NAD(+). In terms of biological role, NQR complex catalyzes the reduction of ubiquinone-1 to ubiquinol by two successive reactions, coupled with the transport of Na(+) ions from the cytoplasm to the periplasm. NqrA to NqrE are probably involved in the second step, the conversion of ubisemiquinone to ubiquinol. The chain is Na(+)-translocating NADH-quinone reductase subunit A from Vibrio vulnificus (strain CMCP6).